The chain runs to 78 residues: Acyl carrier protein (78 aa).

One can recognise a Carrier domain in the interval 2 to 77; sequence SNIEDRVRKI…AAIDYVNSAS (76 aa). An O-(pantetheine 4'-phosphoryl)serine modification is found at Ser37.

Belongs to the acyl carrier protein (ACP) family. Post-translationally, 4'-phosphopantetheine is transferred from CoA to a specific serine of apo-ACP by AcpS. This modification is essential for activity because fatty acids are bound in thioester linkage to the sulfhydryl of the prosthetic group.

Its subcellular location is the cytoplasm. The protein operates within lipid metabolism; fatty acid biosynthesis. Its function is as follows. Carrier of the growing fatty acid chain in fatty acid biosynthesis. In Photobacterium profundum (strain SS9), this protein is Acyl carrier protein.